Reading from the N-terminus, the 443-residue chain is Proline--tRNA ligase (443 aa).

This sequence belongs to the class-II aminoacyl-tRNA synthetase family. ProS type 2 subfamily. As to quaternary structure, homodimer.

Its subcellular location is the cytoplasm. The enzyme catalyses tRNA(Pro) + L-proline + ATP = L-prolyl-tRNA(Pro) + AMP + diphosphate. Functionally, catalyzes the attachment of proline to tRNA(Pro) in a two-step reaction: proline is first activated by ATP to form Pro-AMP and then transferred to the acceptor end of tRNA(Pro). The sequence is that of Proline--tRNA ligase from Methylobacterium nodulans (strain LMG 21967 / CNCM I-2342 / ORS 2060).